Reading from the N-terminus, the 349-residue chain is 4-hydroxy-2-oxovalerate aldolase 2 (349 aa).

The region spanning 12–264 is the Pyruvate carboxyltransferase domain; the sequence is VRMTDTSLRD…KTGIDFFDIA (253 aa). Position 20–21 (20–21) interacts with substrate; the sequence is RD. Asp-21 lines the Mn(2+) pocket. Residue His-24 is the Proton acceptor of the active site. Substrate-binding residues include Ser-174 and His-203. The Mn(2+) site is built by His-203 and His-205. Tyr-294 contacts substrate.

This sequence belongs to the 4-hydroxy-2-oxovalerate aldolase family.

The catalysed reaction is (S)-4-hydroxy-2-oxopentanoate = acetaldehyde + pyruvate. This is 4-hydroxy-2-oxovalerate aldolase 2 (bphI-2) from Mycolicibacterium smegmatis (strain ATCC 700084 / mc(2)155) (Mycobacterium smegmatis).